Here is a 778-residue protein sequence, read N- to C-terminus: Preaspterpenacid I synthase sttA (778 aa).

The sesterterpenoid synthase stretch occupies residues 4–359 (ISDVMKHCVP…RYHRTDLATT (356 aa)). Residue Asp-105 coordinates Mg(2+). Asp-105 contacts substrate. The interval 211–214 (RVNE) is substrate. Asn-255 serves as a coordination point for substrate. Substrate stretches follow at residues 259 to 263 (SFPKE) and 350 to 351 (RY). Residues 360 to 774 (AEDRATLIGK…RMMLLGMGPK (415 aa)) are geranylfarneyl diphosphate synthase. Residues 423–445 (AFKKSNPRNGKQNGTEGSKGTFT) are disordered. Over residues 429 to 445 (PRNGKQNGTEGSKGTFT) the composition is skewed to polar residues. Positions 493, 496, and 525 each coordinate isopentenyl diphosphate. Residues Asp-532 and Asp-536 each coordinate Mg(2+). Arg-541 is a binding site for dimethylallyl diphosphate. Arg-542 contacts isopentenyl diphosphate. Dimethylallyl diphosphate is bound by residues Lys-619, Thr-620, Gln-657, Asn-664, and Lys-674.

In the N-terminal section; belongs to the terpene synthase family. This sequence in the C-terminal section; belongs to the FPP/GGPP synthase family.

It catalyses the reaction 4 isopentenyl diphosphate + dimethylallyl diphosphate = (2E,6E,10E,14E)-geranylfarnesyl diphosphate + 4 diphosphate. The enzyme catalyses (2E,6E,10E,14E)-geranylfarnesyl diphosphate + H2O = preaspterpenacid acid I + diphosphate. It participates in secondary metabolite biosynthesis; terpenoid biosynthesis. In terms of biological role, sesterterpenoid synthase; part of the gene cluster that mediates the biosynthesis of aspterpenacids. Performs both prenyl transferase and terpene cyclase activity, converting isopentenyl diphosphate and dimethylallyl diphosphate into geranylfarnesyl diphosphate (GFPP) and then converting GFPP into preaspterpenacid I. C22-oxidative modification of preaspterpenacid I by the cytochrome P450 monooxygenase sttB then leads to preaspterpenacid II. It has still to be determined how preaspterpenacid II is further modified to produce aspterpenacids. The sequence is that of Preaspterpenacid I synthase sttA from Aspergillus terreus.